The chain runs to 60 residues: U-actitoxin-Avd12b (60 aa).

The N-terminal stretch at 1–6 (SKEGMS) is a signal peptide. The propeptide occupies 7–12 (YEEPEN). An EGF-like domain is found at 14–56 (EGVACTGQYAESFCLNGGTCRYIQSIGEYYCICVGDYTGHRCE). Cystine bridges form between Cys18–Cys33, Cys27–Cys44, and Cys46–Cys55.

Belongs to the EGF domain peptide family.

The protein resides in the secreted. Its subcellular location is the nematocyst. In terms of biological role, has both toxic and EGF activity. Its EGF activity consists of rounding cells (morphological change) and inducing tyrosine phosphorylation of the EGFR in A431 cells, but with a lower potency that human EGF. This Anemonia viridis (Snakelocks anemone) protein is U-actitoxin-Avd12b.